Consider the following 132-residue polypeptide: Replication enhancer protein (132 aa).

This sequence belongs to the geminiviridae replication enhancer protein family. As to quaternary structure, homooligomer. Interacts with the replication-associated protein (REP). Interacts with host proliferating cell nuclear antigen (PCNA). Interacts with host retinoblastoma-related protein 1 (RBR1), and may thereby deregulate the host cell cycle. Oligomerization and interaction with PCNA are necessary for optimal replication enhancement.

Increases viral DNA accumulation. Enhances infectivity and symptom expression. This is Replication enhancer protein from Macroptilium lathyroides (Lima bean).